Consider the following 357-residue polypeptide: Sorbitol dehydrogenase 1 (357 aa).

A Zn(2+)-binding site is contributed by C43. Y49 contacts substrate. The Zn(2+) site is built by H68 and E69. E154 is a substrate binding site. NAD(+)-binding positions include D202, K207, 275 to 277, and 299 to 301; these read VGM and CFR. Substrate contacts are provided by R301 and Y302.

This sequence belongs to the zinc-containing alcohol dehydrogenase family. Homotetramer. Zn(2+) serves as cofactor.

The enzyme catalyses keto-D-fructose + NADH + H(+) = D-sorbitol + NAD(+). It catalyses the reaction xylitol + NAD(+) = D-xylulose + NADH + H(+). Polyol dehydrogenase that catalyzes the reversible NAD(+)-dependent oxidation of various sugar alcohols. Is active with D-sorbitol (D-glucitol) and xylitol as substrates, leading to the C2-oxidized product D-fructose and D-xylulose, respectively. Is likely involved in the utilization of D-sorbitol as a sole carbon source for growth. Has no activity on mannitol and primary alcohols such as ethanol. This is Sorbitol dehydrogenase 1 (SOR1) from Saccharomyces cerevisiae (strain ATCC 204508 / S288c) (Baker's yeast).